The chain runs to 310 residues: Glutaminase (310 aa).

Residues serine 67, asparagine 118, glutamate 161, asparagine 168, tyrosine 192, tyrosine 244, and valine 262 each coordinate substrate.

The protein belongs to the glutaminase family. Homotetramer.

It catalyses the reaction L-glutamine + H2O = L-glutamate + NH4(+). This is Glutaminase from Legionella pneumophila (strain Paris).